A 118-amino-acid polypeptide reads, in one-letter code: Large ribosomal subunit protein bL19 (118 aa).

Belongs to the bacterial ribosomal protein bL19 family.

In terms of biological role, this protein is located at the 30S-50S ribosomal subunit interface and may play a role in the structure and function of the aminoacyl-tRNA binding site. The sequence is that of Large ribosomal subunit protein bL19 from Helicobacter pylori (strain HPAG1).